The sequence spans 223 residues: Cytidylate kinase (223 aa).

11 to 19 (GPAGVGKST) contributes to the ATP binding site.

It belongs to the cytidylate kinase family. Type 1 subfamily.

Its subcellular location is the cytoplasm. The enzyme catalyses CMP + ATP = CDP + ADP. It catalyses the reaction dCMP + ATP = dCDP + ADP. The protein is Cytidylate kinase of Maridesulfovibrio salexigens (strain ATCC 14822 / DSM 2638 / NCIMB 8403 / VKM B-1763) (Desulfovibrio salexigens).